The chain runs to 227 residues: Ribonuclease HII (227 aa).

Positions 1–210 constitute an RNase H type-2 domain; it reads MKLAGIDEAG…LKKIEEKLAK (210 aa). Asp-7, Glu-8, and Asp-105 together coordinate a divalent metal cation.

The protein belongs to the RNase HII family. It depends on Mn(2+) as a cofactor. Mg(2+) serves as cofactor.

Its subcellular location is the cytoplasm. It catalyses the reaction Endonucleolytic cleavage to 5'-phosphomonoester.. Functionally, endonuclease that specifically degrades the RNA of RNA-DNA hybrids. This Thermococcus onnurineus (strain NA1) protein is Ribonuclease HII.